Reading from the N-terminus, the 5061-residue chain is E3 ubiquitin-protein ligase rnf213-beta (5061 aa).

Positions 1 to 12 (MTRKRKSGKKGK) are enriched in basic residues. The tract at residues 1-334 (MTRKRKSGKK…QRKPSPVRAP (334 aa)) is disordered. 2 stretches are compositionally biased toward polar residues: residues 24-52 (GGST…TQKD) and 75-87 (SDGS…TNKE). The segment covering 100–110 (LQKKGPQKRKG) has biased composition (basic residues). Polar residues-rich tracts occupy residues 127 to 163 (QTSY…TSAS) and 172 to 200 (TETV…QPPQ). Basic and acidic residues-rich tracts occupy residues 217-229 (KGSE…EESV) and 236-289 (LSEI…EEPK). The segment covering 292-301 (AAAAATGKTG) has biased composition (low complexity). The span at 306–322 (EQTNQIEANQDSTMESK) shows a compositional bias: polar residues. ATP is bound by residues 1923 to 1928 (AVGKSL), glutamate 2023, aspartate 2074, lysine 2417, and serine 2492. 10 residues coordinate Zn(2+): cysteine 3957, cysteine 3960, cysteine 3972, histidine 3974, cysteine 3977, cysteine 3980, cysteine 3993, cysteine 3996, cysteine 4451, and histidine 4455. The RING-type zinc-finger motif lies at 3957-3997 (CRVCLMELSEPFALPCEHVFCRSCLRRSMEREEAQHCPVCR). The RZ-type zinc finger occupies 4429-4501 (MPDDHTSEAK…AYGDYDRTRP (73 aa)). Cysteine 4462 serves as the catalytic Nucleophile; for E3 ubiquitin-lipopolysaccharide ligase activity. The Zn(2+) site is built by cysteine 4471 and cysteine 4474.

This sequence belongs to the AAA ATPase family.

The protein localises to the cytoplasm. The protein resides in the cytosol. It localises to the lipid droplet. It carries out the reaction S-ubiquitinyl-[E2 ubiquitin-conjugating enzyme]-L-cysteine + [acceptor protein]-L-lysine = [E2 ubiquitin-conjugating enzyme]-L-cysteine + N(6)-ubiquitinyl-[acceptor protein]-L-lysine.. It catalyses the reaction ATP + H2O = ADP + phosphate + H(+). Its pathway is protein modification; protein ubiquitination. In terms of biological role, atypical E3 ubiquitin ligase that can catalyze ubiquitination of both proteins and lipids, and which is involved in various processes, such as lipid metabolism, angiogenesis and cell-autonomous immunity. Acts as a key immune sensor by catalyzing ubiquitination of the lipid A moiety of bacterial lipopolysaccharide (LPS) via its RZ-type zinc-finger: restricts the proliferation of cytosolic bacteria, such as Salmonella, by generating the bacterial ubiquitin coat through the ubiquitination of LPS. Ubiquitination of LPS triggers cell-autonomous immunity, such as antibacterial autophagy, leading to degradation of the microbial invader. Involved in lipid metabolism by regulating fat storage and lipid droplet formation; act by inhibiting the lipolytic process. Also regulates lipotoxicity by inhibiting desaturation of fatty acids. Also acts as an E3 ubiquitin-protein ligase via its RING-type zinc finger. Involved in the non-canonical Wnt signaling pathway in vascular development: acts by mediating ubiquitination and degradation of proteins downstream of rspo3, leading to inhibit the non-canonical Wnt signaling pathway and promoting vessel regression. Also has ATPase activity; ATPase activity is required for ubiquitination of LPS. The sequence is that of E3 ubiquitin-protein ligase rnf213-beta (rnf213b) from Danio rerio (Zebrafish).